Reading from the N-terminus, the 157-residue chain is Glucosamine 6-phosphate N-acetyltransferase 1 (157 aa).

Residues 9–157 (ISFRPLDIDD…SIYLPTPPKL (149 aa)) enclose the N-acetyltransferase domain. Substrate-binding positions include Thr31, 78 to 81 (KFIR), and 90 to 92 (EDI). Acetyl-CoA is bound at residue 100-105 (GKNLGL). Residue 121 to 122 (YK) participates in substrate binding. 135–137 (YEK) contacts acetyl-CoA.

The protein belongs to the acetyltransferase family. GNA1 subfamily.

It catalyses the reaction D-glucosamine 6-phosphate + acetyl-CoA = N-acetyl-D-glucosamine 6-phosphate + CoA + H(+). The protein operates within nucleotide-sugar biosynthesis; UDP-N-acetyl-alpha-D-glucosamine biosynthesis; N-acetyl-alpha-D-glucosamine 1-phosphate from alpha-D-glucosamine 6-phosphate (route I): step 1/2. This chain is Glucosamine 6-phosphate N-acetyltransferase 1 (gna1), found in Dictyostelium discoideum (Social amoeba).